Reading from the N-terminus, the 290-residue chain is uncharacterized protein (290 aa).

Residues 161–216 are a coiled coil; it reads SNQREVESLEQLVHEQLNKLNTESKMEFENRKNDTKNEVQQLSARIVELHNLLAVS. Residues 236-256 form a helical membrane-spanning segment; that stretch reads AGVVMAFTGFLVLVIPFGLGV.

Its subcellular location is the mitochondrion membrane. This is an uncharacterized protein from Schizosaccharomyces pombe (strain 972 / ATCC 24843) (Fission yeast).